The chain runs to 316 residues: Ribosomal RNA small subunit methyltransferase H (316 aa).

S-adenosyl-L-methionine-binding positions include 35-37, Asp-55, Phe-84, Asp-105, and Gln-112; that span reads AGH.

The protein belongs to the methyltransferase superfamily. RsmH family.

The protein localises to the cytoplasm. The catalysed reaction is cytidine(1402) in 16S rRNA + S-adenosyl-L-methionine = N(4)-methylcytidine(1402) in 16S rRNA + S-adenosyl-L-homocysteine + H(+). Specifically methylates the N4 position of cytidine in position 1402 (C1402) of 16S rRNA. In Streptococcus pneumoniae (strain P1031), this protein is Ribosomal RNA small subunit methyltransferase H.